Reading from the N-terminus, the 78-residue chain is Small ribosomal subunit protein bS18 (78 aa).

This sequence belongs to the bacterial ribosomal protein bS18 family. In terms of assembly, part of the 30S ribosomal subunit. Forms a tight heterodimer with protein bS6.

In terms of biological role, binds as a heterodimer with protein bS6 to the central domain of the 16S rRNA, where it helps stabilize the platform of the 30S subunit. This is Small ribosomal subunit protein bS18 from Rhodospirillum rubrum (strain ATCC 11170 / ATH 1.1.1 / DSM 467 / LMG 4362 / NCIMB 8255 / S1).